The chain runs to 156 residues: Endogenous retrovirus group K member 113 Pro protein (156 aa).

The Peptidase A2 domain maps to 21 to 96 (FEGLVDTGAD…IPLNLWGRDL (76 aa)). The active site involves D26. Residues 111–156 (YSPTSQKIMTKMGYIPGKGLGKNEDGIKIPVEAKINQKREGIGYPF) enclose the G-patch domain.

The protein belongs to the peptidase A2 family. HERV class-II K(HML-2) subfamily. As to quaternary structure, active as a homodimer. Post-translationally, autoproteolytically processed at the N-terminus. Expected C-terminal autoprocessing not detected. The sequence shown is that of the processed Pro protein.

It carries out the reaction Processing at the authentic HIV-1 PR recognition site and release of the mature p17 matrix and the p24 capsid protein, as a result of the cleavage of the -SQNY-|-PIVQ- cleavage site.. Functionally, retroviral proteases have roles in the processing of the primary translation products and the maturation of the viral particle. Endogenous Pro proteins may have kept, lost or modified their original function during evolution. The chain is Endogenous retrovirus group K member 113 Pro protein (HERVK_113) from Homo sapiens (Human).